The primary structure comprises 349 residues: Isopentenyl-diphosphate delta-isomerase (349 aa).

Residue 6–7 participates in substrate binding; the sequence is RK. Residues 62–64, Ser-93, and Asn-122 each bind FMN; that span reads AMT. Gln-152 serves as a coordination point for substrate. Residue Glu-153 coordinates Mg(2+). FMN-binding positions include Lys-184, Thr-214, 259–261, and 280–281; these read GVR and AG.

Belongs to the IPP isomerase type 2 family. As to quaternary structure, homooctamer. Dimer of tetramers. Requires FMN as cofactor. NADPH is required as a cofactor. The cofactor is Mg(2+).

It localises to the cytoplasm. The catalysed reaction is isopentenyl diphosphate = dimethylallyl diphosphate. Functionally, involved in the biosynthesis of isoprenoids. Catalyzes the 1,3-allylic rearrangement of the homoallylic substrate isopentenyl (IPP) to its allylic isomer, dimethylallyl diphosphate (DMAPP). The protein is Isopentenyl-diphosphate delta-isomerase of Geobacillus sp. (strain WCH70).